The primary structure comprises 147 residues: MNIGEASKTSGVSSKMIRYYEQIGLISPALRTESSYRTYGDNDVHTLRFVRRARDLGFSVEQIKELLALWRDRSRASSDVKAVALEHIAELERKIAAIQEMTRTLKHLAGHCHGDDRPDCPIIEEIANGSAQVNMEVNPRFGVAALK.

In terms of domain architecture, HTH merR-type spans methionine 1 to leucine 69. The H-T-H motif DNA-binding region spans isoleucine 3–glutamine 22.

It is found in the cytoplasm. Functionally, transcriptional regulator involved in acid tolerance. Binds copper. The polypeptide is Heavy metal-dependent transcription regulator 2 (hmrR2) (Rhizobium meliloti (strain 1021) (Ensifer meliloti)).